A 630-amino-acid chain; its full sequence is Betaine/ectoine transporter LcoP (630 aa).

Positions 1 to 13 (MSTNSGNNLPESQ) are enriched in polar residues. The tract at residues 1 to 28 (MSTNSGNNLPESQESPEEPHYPHDTHPG) is disordered. Residues 17–26 (EEPHYPHDTH) show a composition bias toward basic and acidic residues. 12 consecutive transmembrane segments (helical) span residues 47 to 67 (TVFGVTAALILAFIAWGISSP), 85 to 105 (TGWLLNFVMLIGIGTMLYIAF), 125 to 145 (FSWIAMMFGAGIGVGIFFFGP), 177 to 197 (FHWGLSAWGLYALVGGALAYS), 230 to 250 (MAIIATLFGTAATLGLSAIQV), 267 to 287 (ILIAIIAILTIGFIISSVSGV), 299 to 319 (ISLTLGLVLFVFITGPTLFLL), 354 to 374 (WTAFYWAWWIAWTPFVGMFIA), 385 to 405 (FALITMAIPSFILILAFTIFG), 436 to 456 (LPLYSITPFILIFVLAVFFVT), 479 to 499 (LIVVFWGLCMMGIAVVMLLTG), and 510 to 530 (LTILIAIPFALVLIVMAIAFI). The disordered stretch occupies residues 611–630 (WADGWTPESTEEGEVDAKKD).

It belongs to the BCCT transporter (TC 2.A.15) family.

It is found in the cell membrane. Its activity is regulated as follows. Uptake is activated by hyperosmotic stress. Shows a small but significant chill stimulation around 15 degrees Celsius. Its function is as follows. Involved in the uptake of osmoprotectants. Can transport betaine and ectoine. Na(+) is probably the coupling ion. The chain is Betaine/ectoine transporter LcoP from Corynebacterium glutamicum (strain ATCC 13032 / DSM 20300 / JCM 1318 / BCRC 11384 / CCUG 27702 / LMG 3730 / NBRC 12168 / NCIMB 10025 / NRRL B-2784 / 534).